The primary structure comprises 196 residues: UMP-CMP kinase (196 aa).

13 to 18 lines the ATP pocket; sequence GAGKGT. Serine 33 carries the phosphoserine modification. The segment at 33-63 is NMP; that stretch reads SAGELLRDERKNPDSQYGELIEKYIKEGKIV. Arginine 39 provides a ligand contact to a ribonucleoside 5'-phosphate. N6-acetyllysine is present on residues lysine 43 and lysine 55. A ribonucleoside 5'-phosphate is bound at residue 61–63; that stretch reads KIV. A Glycyl lysine isopeptide (Lys-Gly) (interchain with G-Cter in SUMO2) cross-link involves residue lysine 73. Residue 93-96 participates in a ribonucleoside 5'-phosphate binding; the sequence is GFPR. Asparagine 100 is a CMP binding site. Lysine 106 bears the N6-succinyllysine mark. The LID stretch occupies residues 133–143; the sequence is ERGKSSGRSDD. Arginine 134 lines the ATP pocket. A ribonucleoside 5'-phosphate is bound by residues arginine 140 and arginine 151. Residue lysine 179 coordinates ATP. Serine 180 is modified (phosphoserine).

The protein belongs to the adenylate kinase family. UMP-CMP kinase subfamily. Monomer. Mg(2+) serves as cofactor. Ubiquitously expressed.

The protein localises to the nucleus. It is found in the cytoplasm. The enzyme catalyses CMP + ATP = CDP + ADP. It catalyses the reaction dCMP + ATP = dCDP + ADP. It carries out the reaction UMP + ATP = UDP + ADP. The catalysed reaction is a 2'-deoxyribonucleoside 5'-diphosphate + ATP = a 2'-deoxyribonucleoside 5'-triphosphate + ADP. The enzyme catalyses a ribonucleoside 5'-diphosphate + ATP = a ribonucleoside 5'-triphosphate + ADP. In terms of biological role, catalyzes the phosphorylation of pyrimidine nucleoside monophosphates at the expense of ATP. Plays an important role in de novo pyrimidine nucleotide biosynthesis. Has preference for UMP and CMP as phosphate acceptors. Also displays broad nucleoside diphosphate kinase activity. In Homo sapiens (Human), this protein is UMP-CMP kinase.